The primary structure comprises 800 residues: Phosphoinositide 3-kinase adapter protein 1 (800 aa).

One can recognise a TIR domain in the interval 8–145 (GGYDVLILYA…AVKKAISEDS (138 aa)). Positions 10–144 (YDVLILYASD…EAVKKAISED (135 aa)) are necessary and sufficient to mediate inhibition of NF-kappa-B downstream of activated TLRs. One can recognise a DBB domain in the interval 185–321 (VQPDHIRCGV…NIPASGLHLF (137 aa)). Phosphotyrosine is present on Y266. Phosphotyrosine; by SYK is present on residues Y423, Y448, and Y463. The disordered stretch occupies residues 527–548 (EMASRPPVPVPRPESSSPQPDN). Residues 643–663 (QQENLKRLRDSITRRQMEKQK) adopt a coiled-coil conformation. Residues 702–713 (PKKELKRGDWKT) are compositionally biased toward basic and acidic residues. Positions 702–800 (PKKELKRGDW…YPPPVPPRGR (99 aa)) are disordered. Low complexity predominate over residues 714 to 737 (ESTSSTTSSASNRSSTRSILSVSS). The span at 749 to 759 (SEASRSRSPIP) shows a compositional bias: polar residues. Composition is skewed to pro residues over residues 767-777 (LPLPERPPRVP) and 791-800 (YPPPVPPRGR).

In terms of assembly, homooligomer. Interacts (phosphorylated on tyrosine residues within YXXM motifs) with PIK3R1 (via SH2 domain); required for BCR- and TLR-mediated activation of phosphoinositide 3-kinase. Constitutively phosphorylated. Phosphorylated on tyrosine residues within the YXXM motifs by BTK and SYK. Isoform 1 and isoform 2 are phosphorylated on tyrosine residues, most likely within the YXXM motifs, via CD19 activation.

The protein resides in the cytoplasm. The protein localises to the cell membrane. Functionally, signaling adapter that contributes to B-cell development by linking B-cell receptor (BCR) signaling to the phosphoinositide 3-kinase (PI3K)-Akt signaling pathway. Has a complementary role to the BCR coreceptor CD19, coupling BCR and PI3K activation by providing a docking site for the PI3K subunit PIK3R1. Alternatively, links Toll-like receptor (TLR) signaling to PI3K activation, a process preventing excessive inflammatory cytokine production. Also involved in the activation of PI3K in natural killer cells. May be involved in the survival of mature B-cells via activation of REL. The protein is Phosphoinositide 3-kinase adapter protein 1 (PIK3AP1) of Gallus gallus (Chicken).